The primary structure comprises 382 residues: Guanylate kinase 1 (382 aa).

Residues 128-310 form the Guanylate kinase-like domain; it reads QKPIVISGPS…CYENLKKLLS (183 aa). 135 to 142 serves as a coordination point for ATP; the sequence is GPSGVGKG. Active-site residues include arginine 168, arginine 261, and arginine 272. Residues asparagine 295 and aspartate 296 each coordinate ATP.

Belongs to the guanylate kinase family. As to quaternary structure, monomer.

The protein resides in the cytoplasm. Its subcellular location is the nucleus. It catalyses the reaction GMP + ATP = GDP + ADP. In terms of biological role, essential for recycling GMP and indirectly, cGMP. In Oryza sativa subsp. japonica (Rice), this protein is Guanylate kinase 1 (GK1).